The sequence spans 224 residues: Thiamine-phosphate synthase (224 aa).

4-amino-2-methyl-5-(diphosphooxymethyl)pyrimidine-binding positions include 41 to 45 (QFRDK) and D77. 2 residues coordinate Mg(2+): D78 and D97. S116 is a 4-amino-2-methyl-5-(diphosphooxymethyl)pyrimidine binding site. Residue 143 to 145 (TNS) participates in 2-[(2R,5Z)-2-carboxy-4-methylthiazol-5(2H)-ylidene]ethyl phosphate binding. Residue K146 coordinates 4-amino-2-methyl-5-(diphosphooxymethyl)pyrimidine. 2-[(2R,5Z)-2-carboxy-4-methylthiazol-5(2H)-ylidene]ethyl phosphate contacts are provided by residues G174 and 194–195 (IS).

It belongs to the thiamine-phosphate synthase family. Mg(2+) serves as cofactor.

The enzyme catalyses 2-[(2R,5Z)-2-carboxy-4-methylthiazol-5(2H)-ylidene]ethyl phosphate + 4-amino-2-methyl-5-(diphosphooxymethyl)pyrimidine + 2 H(+) = thiamine phosphate + CO2 + diphosphate. It carries out the reaction 2-(2-carboxy-4-methylthiazol-5-yl)ethyl phosphate + 4-amino-2-methyl-5-(diphosphooxymethyl)pyrimidine + 2 H(+) = thiamine phosphate + CO2 + diphosphate. The catalysed reaction is 4-methyl-5-(2-phosphooxyethyl)-thiazole + 4-amino-2-methyl-5-(diphosphooxymethyl)pyrimidine + H(+) = thiamine phosphate + diphosphate. Its pathway is cofactor biosynthesis; thiamine diphosphate biosynthesis; thiamine phosphate from 4-amino-2-methyl-5-diphosphomethylpyrimidine and 4-methyl-5-(2-phosphoethyl)-thiazole: step 1/1. In terms of biological role, condenses 4-methyl-5-(beta-hydroxyethyl)thiazole monophosphate (THZ-P) and 2-methyl-4-amino-5-hydroxymethyl pyrimidine pyrophosphate (HMP-PP) to form thiamine monophosphate (TMP). The protein is Thiamine-phosphate synthase of Latilactobacillus sakei subsp. sakei (strain 23K) (Lactobacillus sakei subsp. sakei).